The chain runs to 151 residues: Aspartate carbamoyltransferase regulatory chain (151 aa).

Positions 108, 113, 136, and 139 each coordinate Zn(2+).

Belongs to the PyrI family. As to quaternary structure, contains catalytic and regulatory chains. Zn(2+) is required as a cofactor.

In terms of biological role, involved in allosteric regulation of aspartate carbamoyltransferase. The chain is Aspartate carbamoyltransferase regulatory chain from Porphyromonas gingivalis (strain ATCC 33277 / DSM 20709 / CIP 103683 / JCM 12257 / NCTC 11834 / 2561).